Consider the following 408-residue polypeptide: Dual-specificity RNA methyltransferase RlmN (408 aa).

The Proton acceptor role is filled by Glu-126. Residues 132 to 373 (EEGRGTLCLS…NQAGYASPIR (242 aa)) enclose the Radical SAM core domain. A disulfide bond links Cys-139 and Cys-384. Residues Cys-146, Cys-150, and Cys-153 each coordinate [4Fe-4S] cluster. S-adenosyl-L-methionine is bound by residues 210 to 211 (GE), Ser-242, 264 to 266 (SLH), and Asn-341. The active-site S-methylcysteine intermediate is Cys-384.

The protein belongs to the radical SAM superfamily. RlmN family. It depends on [4Fe-4S] cluster as a cofactor.

It is found in the cytoplasm. The catalysed reaction is adenosine(2503) in 23S rRNA + 2 reduced [2Fe-2S]-[ferredoxin] + 2 S-adenosyl-L-methionine = 2-methyladenosine(2503) in 23S rRNA + 5'-deoxyadenosine + L-methionine + 2 oxidized [2Fe-2S]-[ferredoxin] + S-adenosyl-L-homocysteine. The enzyme catalyses adenosine(37) in tRNA + 2 reduced [2Fe-2S]-[ferredoxin] + 2 S-adenosyl-L-methionine = 2-methyladenosine(37) in tRNA + 5'-deoxyadenosine + L-methionine + 2 oxidized [2Fe-2S]-[ferredoxin] + S-adenosyl-L-homocysteine. Functionally, specifically methylates position 2 of adenine 2503 in 23S rRNA and position 2 of adenine 37 in tRNAs. m2A2503 modification seems to play a crucial role in the proofreading step occurring at the peptidyl transferase center and thus would serve to optimize ribosomal fidelity. This is Dual-specificity RNA methyltransferase RlmN from Bartonella tribocorum (strain CIP 105476 / IBS 506).